A 396-amino-acid polypeptide reads, in one-letter code: 8-amino-7-oxononanoate synthase (396 aa).

Substrate is bound at residue arginine 21. Residue 112–113 coordinates pyridoxal 5'-phosphate; the sequence is GY. Histidine 137 provides a ligand contact to substrate. Residues serine 183, histidine 211, and threonine 239 each coordinate pyridoxal 5'-phosphate. Lysine 242 is modified (N6-(pyridoxal phosphate)lysine). Residue threonine 358 participates in substrate binding.

This sequence belongs to the class-II pyridoxal-phosphate-dependent aminotransferase family. BioF subfamily. As to quaternary structure, homodimer. Requires pyridoxal 5'-phosphate as cofactor.

It catalyses the reaction 6-carboxyhexanoyl-[ACP] + L-alanine + H(+) = (8S)-8-amino-7-oxononanoate + holo-[ACP] + CO2. Its pathway is cofactor biosynthesis; biotin biosynthesis. Functionally, catalyzes the decarboxylative condensation of pimeloyl-[acyl-carrier protein] and L-alanine to produce 8-amino-7-oxononanoate (AON), [acyl-carrier protein], and carbon dioxide. This chain is 8-amino-7-oxononanoate synthase, found in Bordetella petrii (strain ATCC BAA-461 / DSM 12804 / CCUG 43448).